The following is a 1501-amino-acid chain: Neither inactivation nor afterpotential protein C (1501 aa).

Positions 16-282 (FEIYEEIAQG…MVEMVEHPFL (267 aa)) constitute a Protein kinase domain. Residues 22-30 (IAQGVNAKV) and K45 each bind ATP. D145 acts as the Proton acceptor in catalysis. The residue at position 183 (S183) is a Phosphoserine. Residues 332–1037 (MYPEDLAALE…FLARLYELQV (706 aa)) form the Myosin motor domain. Positions 913–934 (LTLLKMLSQNANLGVHFVRCIR) are actin-binding. IQ domains lie at 1036-1065 (QVKKVIKVQSMMRALLARKRVKGGKVFKLG) and 1072-1101 (HDVAASKIQKAFRGFRDRVRLPPLVNEKSG). An interaction with rtp region spans residues 1043–1271 (VQSMMRALLA…RMGESDNIYN (229 aa)). A non alpha-helical, C-terminal domain region spans residues 1066 to 1501 (KKGPEHHDVA…ITLSGYAVDI (436 aa)). Disordered stretches follow at residues 1308–1364 (NWGV…DPVR) and 1390–1473 (KTNY…EDSN). Residues 1326-1335 (APPPPPPPMP) are compositionally biased toward pro residues. Residues 1336–1358 (SSNYYRNNPNQQQRNYQQRSSYP) are compositionally biased toward low complexity. Over residues 1405–1414 (NNRRGSDSGD) the composition is skewed to basic and acidic residues. Residues 1449-1463 (FGQQQRAPTLRQSPA) show a composition bias toward polar residues.

In the C-terminal section; belongs to the TRAFAC class myosin-kinesin ATPase superfamily. Myosin family. It in the N-terminal section; belongs to the protein kinase superfamily. Ser/Thr protein kinase family. In terms of assembly, interacts with rtp. In terms of tissue distribution, expressed in the phototransducing compartment of photoreceptor cells, the rhabdomeres (at protein level).

It is found in the cytoplasm. Its subcellular location is the cytoskeleton. It localises to the nucleus. The protein resides in the membrane. The protein localises to the cell projection. It is found in the rhabdomere membrane. It carries out the reaction L-seryl-[protein] + ATP = O-phospho-L-seryl-[protein] + ADP + H(+). It catalyses the reaction L-threonyl-[protein] + ATP = O-phospho-L-threonyl-[protein] + ADP + H(+). Functionally, required for photoreceptor cell function. The ninaC proteins combines putative serine/threonine-protein kinase and myosin activities. Essential for the expression and stability of the rtp protein in the photoreceptors. The rtp/ninaC complex is required for stability of inad and inac and the normal termination of phototransduction in the retina. This is Neither inactivation nor afterpotential protein C (ninaC) from Drosophila melanogaster (Fruit fly).